A 349-amino-acid polypeptide reads, in one-letter code: Very-long-chain 3-oxoacyl-CoA reductase (349 aa).

Residues 19-39 (AIIFALLLGVFKLTVFSLKFA) form a helical membrane-spanning segment. Residues Val-65, Asp-119, Asn-146, Tyr-221, Lys-225, Val-254, and Ser-256 each coordinate NADP(+). Tyr-221 serves as the catalytic Proton donor. Lys-225 serves as the catalytic Lowers pKa of active site Tyr.

Belongs to the short-chain dehydrogenases/reductases (SDR) family.

It is found in the endoplasmic reticulum membrane. It catalyses the reaction a very-long-chain (3R)-3-hydroxyacyl-CoA + NADP(+) = a very-long-chain 3-oxoacyl-CoA + NADPH + H(+). It participates in lipid metabolism; fatty acid biosynthesis. In terms of biological role, component of the microsomal membrane bound fatty acid elongation system, which produces the 26-carbon very long-chain fatty acids (VLCFA) from palmitate. Catalyzes the reduction of the 3-ketoacyl-CoA intermediate that is formed in each cycle of fatty acid elongation. VLCFAs serve as precursors for ceramide and sphingolipids. This chain is Very-long-chain 3-oxoacyl-CoA reductase, found in Candida albicans (strain SC5314 / ATCC MYA-2876) (Yeast).